The chain runs to 294 residues: Metallophosphoesterase MPPED2 (294 aa).

Mn(2+)-binding residues include aspartate 65, histidine 67, aspartate 86, asparagine 117, and histidine 213. 117–118 (NH) provides a ligand contact to GMP. GMP is bound by residues 225-226 (KE) and 252-255 (GIHE). Histidine 254 is a binding site for Mn(2+).

Belongs to the UPF0046 family. As to quaternary structure, homodimer. It depends on Mn(2+) as a cofactor. Requires Co(2+) as cofactor. Expressed predominantly in fetal brain.

Inhibited by nmolar levels of AMP and GMP. Its function is as follows. Displays low metallophosphoesterase activity (in vitro). May play a role in the development of the nervous system. This Homo sapiens (Human) protein is Metallophosphoesterase MPPED2 (MPPED2).